The primary structure comprises 216 residues: ATP phosphoribosyltransferase (216 aa).

This sequence belongs to the ATP phosphoribosyltransferase family. Short subfamily. Heteromultimer composed of HisG and HisZ subunits.

It is found in the cytoplasm. The enzyme catalyses 1-(5-phospho-beta-D-ribosyl)-ATP + diphosphate = 5-phospho-alpha-D-ribose 1-diphosphate + ATP. The protein operates within amino-acid biosynthesis; L-histidine biosynthesis; L-histidine from 5-phospho-alpha-D-ribose 1-diphosphate: step 1/9. Catalyzes the condensation of ATP and 5-phosphoribose 1-diphosphate to form N'-(5'-phosphoribosyl)-ATP (PR-ATP). Has a crucial role in the pathway because the rate of histidine biosynthesis seems to be controlled primarily by regulation of HisG enzymatic activity. The protein is ATP phosphoribosyltransferase of Prochlorococcus marinus (strain MIT 9211).